A 114-amino-acid chain; its full sequence is MSPWEAKWIRHSDVRPFPQPEPMTVEEKVAVMLKPELHLSSGCHPYPAVNDLGETNGGLKTTGAPSGMCKGSGWGSQFTVDTHHLEASGPSCTRGTFQKTCRRHTSGIATTGST.

Belongs to the Necrosis inducing protein (NPP1) family.

Its subcellular location is the secreted. The protein localises to the host cytoplasm. Probable secreted effector that may act as a pathogen-associated molecular pattern (PAMP) recognized by the plant immune system. Seems not to induce necrosis, neither in several susceptible or resistant Vitis species nor in the dicot model plant Nicotiana benthamiana. This Plasmopara viticola (Downy mildew of grapevine) protein is NLP effector protein 1.